A 99-amino-acid chain; its full sequence is Protein RnfH (99 aa).

The protein belongs to the UPF0125 (RnfH) family.

This is Protein RnfH from Buchnera aphidicola subsp. Acyrthosiphon pisum (strain 5A).